Reading from the N-terminus, the 164-residue chain is Probable Brix domain-containing ribosomal biogenesis protein (164 aa).

Positions 1–164 (MIITTSRKPS…IKTVKILDIE (164 aa)) constitute a Brix domain.

Functionally, probably involved in the biogenesis of the ribosome. This chain is Probable Brix domain-containing ribosomal biogenesis protein, found in Methanococcus maripaludis (strain DSM 14266 / JCM 13030 / NBRC 101832 / S2 / LL).